The following is a 651-amino-acid chain: Acetyl-coenzyme A synthetase (651 aa).

CoA-binding positions include Arg-189–Lys-192, Thr-311, and Asn-335. Residues Gly-387–Pro-389, Asp-411–Thr-416, Asp-500, and Arg-515 each bind ATP. Ser-523 serves as a coordination point for CoA. Residue Arg-526 coordinates ATP. The Mg(2+) site is built by Val-537, His-539, and Val-542. A CoA-binding site is contributed by Arg-584. Lys-609 is subject to N6-acetyllysine.

The protein belongs to the ATP-dependent AMP-binding enzyme family. Mg(2+) serves as cofactor. Acetylated. Deacetylation by the SIR2-homolog deacetylase activates the enzyme.

The catalysed reaction is acetate + ATP + CoA = acetyl-CoA + AMP + diphosphate. Catalyzes the conversion of acetate into acetyl-CoA (AcCoA), an essential intermediate at the junction of anabolic and catabolic pathways. AcsA undergoes a two-step reaction. In the first half reaction, AcsA combines acetate with ATP to form acetyl-adenylate (AcAMP) intermediate. In the second half reaction, it can then transfer the acetyl group from AcAMP to the sulfhydryl group of CoA, forming the product AcCoA. This chain is Acetyl-coenzyme A synthetase, found in Allorhizobium ampelinum (strain ATCC BAA-846 / DSM 112012 / S4) (Agrobacterium vitis (strain S4)).